A 527-amino-acid chain; its full sequence is DNA damage-binding protein cmr1 (527 aa).

The disordered stretch occupies residues 35 to 90 (AGLFPPKSARSSPGGLTKPKKKPAPKKVKKEDEDLVPRRMSSRLRGLAADSEVAKR). Residues 52 to 62 (KPKKKPAPKKV) show a composition bias toward basic residues. WD repeat units follow at residues 185-226 (LTPE…PISA), 249-289 (PHTR…SVEK), 296-336 (SDDI…RSAV), 341-381 (LSEK…HDEP), 388-427 (VSRLSVSHAAFNSAGQIATSSYDDTLKIYDFGSKGIAAWK), 450-493 (GRWV…LAQL), and 496-527 (DGITAVPAVAVFHRSTNWIAGGTASGKICLWM). The tract at residues 284 to 303 (TTSVEKYAPESTSDDIPISG) is disordered.

Belongs to the WD repeat DDB2/WDR76 family.

DNA-binding protein that binds to both single- and double-stranded DNA. Binds preferentially to UV-damaged DNA. May be involved in DNA-metabolic processes. This Neosartorya fischeri (strain ATCC 1020 / DSM 3700 / CBS 544.65 / FGSC A1164 / JCM 1740 / NRRL 181 / WB 181) (Aspergillus fischerianus) protein is DNA damage-binding protein cmr1.